A 244-amino-acid chain; its full sequence is Phosphoadenosine 5'-phosphosulfate reductase (244 aa).

Cys239 serves as the catalytic Nucleophile; cysteine thiosulfonate intermediate.

It belongs to the PAPS reductase family. CysH subfamily.

The protein resides in the cytoplasm. The enzyme catalyses [thioredoxin]-disulfide + sulfite + adenosine 3',5'-bisphosphate + 2 H(+) = [thioredoxin]-dithiol + 3'-phosphoadenylyl sulfate. Its pathway is sulfur metabolism; hydrogen sulfide biosynthesis; sulfite from sulfate: step 3/3. Catalyzes the formation of sulfite from phosphoadenosine 5'-phosphosulfate (PAPS) using thioredoxin as an electron donor. The sequence is that of Phosphoadenosine 5'-phosphosulfate reductase from Yersinia pseudotuberculosis serotype O:1b (strain IP 31758).